A 266-amino-acid polypeptide reads, in one-letter code: Protein YABBY 5 (266 aa).

The disordered stretch occupies residues 1 to 22; that stretch reads MMSSAPETFSLDHLSQHQQQQP. Residues 36–63 form a C4-type zinc finger; it reads CNFCDTILAVGVPCSSLFKTVTVRCGHC. Residues 119 to 141 are compositionally biased toward low complexity; sequence ASPNVSSITSSNSSCANNAPATS. A disordered region spans residues 119–174; the sequence is ASPNVSSITSSNSSCANNAPATSMASAANKATQREPQQPKNAPSANRTSEKRQRVP. The span at 142–165 shows a compositional bias: polar residues; that stretch reads MASAANKATQREPQQPKNAPSANR.

This sequence belongs to the YABBY family.

The protein localises to the nucleus. Its function is as follows. May be involved in leaf cell growth and differentiation, rather than abaxial cell fate determination. The protein is Protein YABBY 5 (YAB5) of Oryza sativa subsp. indica (Rice).